The following is a 695-amino-acid chain: NADPH--cytochrome P450 reductase (695 aa).

Over 1 to 8 (MAQLDTLD) the chain is Lumenal. A helical transmembrane segment spans residues 9–31 (VVVLAVLLAGSIAYFTKGTFWAV). At 32-695 (AKDPYASSGP…SGSYQEDVWS (664 aa)) the chain is on the cytoplasmic side. Positions 66-221 (CVIFYGSQTG…DFLAWKEPMW (156 aa)) constitute a Flavodoxin-like domain. FMN is bound by residues 72–77 (SQTGTA), 123–126 (ATYG), 169–178 (LGNNTYEHYN), and Asp-204. The FAD-binding FR-type domain occupies 277 to 538 (HNPYIAPIVE…HVRHSNFKLP (262 aa)). Arg-296 provides a ligand contact to NADP(+). Residues 451–454 (RYYS), 469–471 (TAV), and 486–489 (GVTT) contribute to the FAD site. A disordered region spans residues 497–516 (QKQNGDPSPDPHGQTYAING). NADP(+) contacts are provided by residues Thr-552, 614 to 615 (SR), 620 to 624 (KVYVQ), and Glu-656. Position 694 (Trp-694) interacts with FAD.

It belongs to the NADPH--cytochrome P450 reductase family. In the N-terminal section; belongs to the flavodoxin family. The protein in the C-terminal section; belongs to the flavoprotein pyridine nucleotide cytochrome reductase family. Requires FAD as cofactor. The cofactor is FMN.

Its subcellular location is the endoplasmic reticulum membrane. It localises to the mitochondrion outer membrane. The protein localises to the cell membrane. It carries out the reaction 2 oxidized [cytochrome P450] + NADPH = 2 reduced [cytochrome P450] + NADP(+) + H(+). In terms of biological role, this enzyme is required for electron transfer from NADP to cytochrome P450 in microsomes. It can also provide electron transfer to heme oxygenase and cytochrome B5. Involved in ergosterol biosynthesis. The protein is NADPH--cytochrome P450 reductase of Emericella nidulans (strain FGSC A4 / ATCC 38163 / CBS 112.46 / NRRL 194 / M139) (Aspergillus nidulans).